We begin with the raw amino-acid sequence, 265 residues long: Glutamate racemase (265 aa).

Residues 9–10 (DS) and 41–42 (YS) contribute to the substrate site. Cys-73 serves as the catalytic Proton donor/acceptor. 74–75 (NT) serves as a coordination point for substrate. Cys-184 acts as the Proton donor/acceptor in catalysis. 185–186 (TH) lines the substrate pocket.

The protein belongs to the aspartate/glutamate racemases family.

The catalysed reaction is L-glutamate = D-glutamate. It participates in cell wall biogenesis; peptidoglycan biosynthesis. In terms of biological role, provides the (R)-glutamate required for cell wall biosynthesis. This chain is Glutamate racemase, found in Actinobacillus pleuropneumoniae serotype 5b (strain L20).